Here is a 396-residue protein sequence, read N- to C-terminus: Actin-related protein 6 (396 aa).

The protein belongs to the actin family. ARP6 subfamily. Interacts with CBX1 and CBX3.

Its subcellular location is the cytoplasm. It is found in the cytoskeleton. The protein localises to the nucleus. It localises to the nucleolus. Functionally, required for formation and/or maintenance of the proper nucleolar structure and function. Plays a dual role in the regulation of ribosomal DNA (rDNA) transcription. In the presence of high glucose, it maintains active rDNA transcription through H2A.Z deposition and under glucose starvation, is required for the repression of rDNA transcription, and this function may be independent of H2A.Z. The protein is Actin-related protein 6 (ACTR6) of Gallus gallus (Chicken).